We begin with the raw amino-acid sequence, 144 residues long: Large ribosomal subunit protein uL13 (144 aa).

It belongs to the universal ribosomal protein uL13 family. As to quaternary structure, part of the 50S ribosomal subunit.

Its function is as follows. This protein is one of the early assembly proteins of the 50S ribosomal subunit, although it is not seen to bind rRNA by itself. It is important during the early stages of 50S assembly. The polypeptide is Large ribosomal subunit protein uL13 (Syntrophomonas wolfei subsp. wolfei (strain DSM 2245B / Goettingen)).